The chain runs to 464 residues: tRNA(Ile2) 2-agmatinylcytidine synthetase TiaS (464 aa).

The protein belongs to the TiaS family.

The protein resides in the cytoplasm. It catalyses the reaction cytidine(34) in tRNA(Ile2) + agmatine + ATP + H2O = 2-agmatinylcytidine(34) in tRNA(Ile2) + AMP + 2 phosphate + 2 H(+). Its function is as follows. ATP-dependent agmatine transferase that catalyzes the formation of 2-agmatinylcytidine (agm2C) at the wobble position (C34) of tRNA(Ile2), converting the codon specificity from AUG to AUA. In Ignisphaera aggregans (strain DSM 17230 / JCM 13409 / AQ1.S1), this protein is tRNA(Ile2) 2-agmatinylcytidine synthetase TiaS.